A 315-amino-acid polypeptide reads, in one-letter code: MSSEVETSEGVDESEKNSMAPEKENHTKMADLSELLKEGTKEAHDRAENTQFVKDFLKGNIKKELFKLATTALYFTYSALEEEMDRNKDHPAFAPLYFPTELHRKAALIKDMKYFFGENWEEQVKCSEAAQKYVDRIHYVGQNEPELLVAHAYTRYMGDLSGGQVLKKVAQRALKLPSTGEGTQFYLFEHVDNAQQFKQFYRARMNALDLNLKTKERIVEEANKAFEYNMQIFSELDQAGSMLARETLEDGLPVHDGKGDIRKCPFYAAQPDKGTLGGSNCPFQTTVAVLRKPSLQLILAASVALVAGLLAWYYM.

Positions 1-12 are enriched in acidic residues; it reads MSSEVETSEGVD. The disordered stretch occupies residues 1–28; it reads MSSEVETSEGVDESEKNSMAPEKENHTK. Position 2 is an N-acetylserine (Ser2). Ser2 carries the phosphoserine modification. At 2–294 the chain is on the cytoplasmic side; it reads SSEVETSEGV…TTVAVLRKPS (293 aa). Over residues 13–28 the composition is skewed to basic and acidic residues; that stretch reads ESEKNSMAPEKENHTK. Residues His44, Tyr153, Lys198, and Arg202 each coordinate heme b. HRM repeat units follow at residues 263 to 268 and 280 to 285; these read KCPFYA and NCPFQT. S-nitrosocysteine is present on residues Cys264 and Cys281. The helical; Anchor for type IV membrane protein transmembrane segment at 295 to 315 threads the bilayer; it reads LQLILAASVALVAGLLAWYYM.

It belongs to the heme oxygenase family. Post-translationally, a soluble form arises by proteolytic removal of the membrane anchor. S-nitrosylated by BLVRB. In terms of tissue distribution, ubiquitous.

It is found in the microsome membrane. It localises to the endoplasmic reticulum membrane. The catalysed reaction is heme b + 3 reduced [NADPH--hemoprotein reductase] + 3 O2 = biliverdin IXalpha + CO + Fe(2+) + 3 oxidized [NADPH--hemoprotein reductase] + 3 H2O + H(+). In terms of biological role, catalyzes the oxidative cleavage of heme at the alpha-methene bridge carbon, released as carbon monoxide (CO), to generate biliverdin IXalpha, while releasing the central heme iron chelate as ferrous iron. The polypeptide is Heme oxygenase 2 (Hmox2) (Mus musculus (Mouse)).